Here is a 742-residue protein sequence, read N- to C-terminus: MEEGFRDRAAFIRGAKDIAKEVKKHAAKKVVKGLDRVQDEYSRRSYSRFEEEEDDDDFPAPADGYYRGEGAQDEEEGGASSDATEGHDEDDEIYEGEYQGIPRAESGGKGERMADGAPLAGVRGGLSDGEGPPGGRGEAQRRKDREELAQQYETILRECGHGRFQWTLYFVLGLALMADGVEVFVVGFVLPSAEKDMCLSDSNKGMLGLIVYLGMMVGAFLWGGLADRLGRRQCLLISLSVNSVFAFFSSFVQGYGTFLFCRLLSGVGIGGSIPIVFSYFSEFLAQEKRGEHLSWLCMFWMIGGVYAAAMAWAIIPHYGWSFQMGSAYQFHSWRVFVLVCAFPSVFAIGALTTQPESPRFFLENGKHDEAWMVLKQVHDTNMRAKGHPERVFSVTHIKTIHQEDELIEIQSDTGTWYQRWGVRALSLGGQVWGNFLSCFSPEYRRITLMMMGVWFTMSFSYYGLTVWFPDMIRHLQAVDYAARTKVFPGERVEHVTFNFTLENQIHRGGQYFNDKFIGLRLKSVSFEDSLFEECYFEDVTSSNTFFRNCTFINTVFYNTDLFEYKFVNSRLVNSTFLHNKEGCPLDVTGTGEGAYMVYFVSFLGTLAVLPGNIVSALLMDKIGRLRMLAGSSVLSCVSCFFLSFGNSESAMIALLCLFGGVSIASWNALDVLTVELYPSDKRTTAFGFLNALCKLAAVLGISIFTSFVGITKAAPILFASAALALGSSLALKLPETRGQVLQ.

Residues 1 to 57 are interaction with SYT1; it reads MEEGFRDRAAFIRGAKDIAKEVKKHAAKKVVKGLDRVQDEYSRRSYSRFEEEEDDDD. Over 1–169 the chain is Cytoplasmic; that stretch reads MEEGFRDRAA…GHGRFQWTLY (169 aa). Over residues 40–49 the composition is skewed to basic and acidic residues; sequence EYSRRSYSRF. The tract at residues 40-145 is disordered; the sequence is EYSRRSYSRF…RGEAQRRKDR (106 aa). Phosphoserine is present on residues S80 and S81. T84 is modified (phosphothreonine). The span at 122–137 shows a compositional bias: gly residues; it reads VRGGLSDGEGPPGGRG. At S127 the chain carries Phosphoserine. Residues 170–190 traverse the membrane as a helical segment; it reads FVLGLALMADGVEVFVVGFVL. The Extracellular segment spans residues 191 to 205; the sequence is PSAEKDMCLSDSNKG. A helical transmembrane segment spans residues 206–226; the sequence is MLGLIVYLGMMVGAFLWGGLA. Over 227 to 233 the chain is Cytoplasmic; sequence DRLGRRQ. The helical transmembrane segment at 234–254 threads the bilayer; it reads CLLISLSVNSVFAFFSSFVQG. Residues 255 to 262 lie on the Extracellular side of the membrane; the sequence is YGTFLFCR. Residues 263-283 traverse the membrane as a helical segment; it reads LLSGVGIGGSIPIVFSYFSEF. Residues 284–294 are Cytoplasmic-facing; that stretch reads LAQEKRGEHLS. Residues 295–315 traverse the membrane as a helical segment; that stretch reads WLCMFWMIGGVYAAAMAWAII. The Extracellular segment spans residues 316-334; that stretch reads PHYGWSFQMGSAYQFHSWR. Residues 335 to 355 form a helical membrane-spanning segment; sequence VFVLVCAFPSVFAIGALTTQP. The Cytoplasmic portion of the chain corresponds to 356 to 447; that stretch reads ESPRFFLENG…CFSPEYRRIT (92 aa). A Phosphoserine modification is found at S393. A helical transmembrane segment spans residues 448 to 468; it reads LMMMGVWFTMSFSYYGLTVWF. Residues 469 to 598 are Extracellular-facing; that stretch reads PDMIRHLQAV…GTGEGAYMVY (130 aa). Y480 is subject to Phosphotyrosine. N-linked (GlcNAc...) asparagine glycans are attached at residues N498 and N548. N573 is a glycosylation site (N-linked (GlcNAc...) asparagine; alternate). N573 carries N-linked (HexNAc...) asparagine; alternate glycosylation. A helical transmembrane segment spans residues 599–619; it reads FVSFLGTLAVLPGNIVSALLM. Topologically, residues 620-626 are cytoplasmic; that stretch reads DKIGRLR. Residues 627–647 traverse the membrane as a helical segment; sequence MLAGSSVLSCVSCFFLSFGNS. At 648 to 651 the chain is on the extracellular side; that stretch reads ESAM. Residues 652-672 form a helical membrane-spanning segment; that stretch reads IALLCLFGGVSIASWNALDVL. Topologically, residues 673-685 are cytoplasmic; sequence TVELYPSDKRTTA. Residues 686-708 traverse the membrane as a helical segment; it reads FGFLNALCKLAAVLGISIFTSFV. Residues 709–712 lie on the Extracellular side of the membrane; the sequence is GITK. A helical transmembrane segment spans residues 713-731; sequence AAPILFASAALALGSSLAL. Topologically, residues 732–742 are cytoplasmic; it reads KLPETRGQVLQ.

Belongs to the major facilitator superfamily. In terms of assembly, interacts with SYT1/synaptotagmin-1 in a calcium-dependent manner. Binds the adapter protein complex AP-2. As to quaternary structure, (Microbial infection) Interacts with C.botulinum neurotoxin type A1 and type A2 (BoNT/A, botA). Interaction is improved by glycosylation of SV2. (Microbial infection) Copurifies with C.botulinum neurotoxin type B (BoNT/B, botB) and synaptotagmin 1 (SYT1). Interaction does not require glycosylation of SV2 or SYT1 proteins. Another group finds only copurification with SYT1 and SYT2. In terms of assembly, (Microbial infection) Interacts with C.botulinum neurotoxin type E (BoNT/E). Interaction requires glycosylation of SV2 proteins. As to quaternary structure, (Microbial infection) Copurifies with C.botulinum neurotoxin type F (BoNT/F) and synaptotagmin 1 (SYT2). Another group finds only copurification with BoNT/F. Interaction requires SV2 glycosylation. In terms of processing, phosphorylation by CK1 of the N-terminal cytoplasmic domain regulates interaction with SYT1. N-glycosylated, on at least 3 residues. Widely expressed throughout the brain (at protein level). Expressed by neural and endocrine cells of brain and spinal cord.

It is found in the presynapse. Its subcellular location is the cytoplasmic vesicle. The protein resides in the secretory vesicle. The protein localises to the synaptic vesicle membrane. Plays a role in the control of regulated secretion in neural and endocrine cells, enhancing selectively low-frequency neurotransmission. Positively regulates vesicle fusion by maintaining the readily releasable pool of secretory vesicles. In terms of biological role, (Microbial infection) Receptor for C.botulinum neurotoxin type A (BoNT/A, botA); the toxin binds via extracellular loop 4. Restores uptake of BoNT/A in mouse cells that are deleted for SV2 receptor. Glycosylation of Asn-573 is not essential for receptor activity, but enhances uptake. Also serves as a receptor for the closely related C.botulinum neurotoxin type A2; glycosylation is not essential but enhances the interaction. Its function is as follows. Possible receptor for C.botulinum neurotoxin type D (BoNT/D, botD); BoNT/D does not bind to extracellular loop 4 as do BoNT/A and BoNT/E, nor to loop 1 or loop 3. Another group does not find a convincing interaction with SV2. Functionally, (Microbial infection) Receptor for C.botulinum neurotoxin type E (BoNT/E); the toxin probably binds via extracellular loop 4 and requires glycosylation of Asn-573. Restores uptake of BoNT/E in mouse cells that are deleted for SV2 receptor. (Microbial infection) Receptor for C.botulinum neurotoxin type F (BoNT/F). Binding requires glycosylation of Asn-573. The sequence is that of Synaptic vesicle glycoprotein 2A (Sv2a) from Rattus norvegicus (Rat).